Consider the following 640-residue polypeptide: Calpain-5 (640 aa).

A Calpain catalytic domain is found at 26–343 (LFEDPHFPAS…FTDIIKCRLI (318 aa)). Active-site residues include cysteine 81, histidine 252, and asparagine 284. Residues 344-496 (NTSYLSIHKT…VFTDVPSNCR (153 aa)) form a domain III region. Residues 499-617 (RLDEPPRTCW…HSLHLQDRSG (119 aa)) form the C2 domain.

The protein belongs to the peptidase C2 family.

Functionally, calcium-regulated non-lysosomal thiol-protease. This is Calpain-5 (Capn5) from Rattus norvegicus (Rat).